Here is a 297-residue protein sequence, read N- to C-terminus: 33 kDa chaperonin (297 aa).

2 disulfides stabilise this stretch: cysteine 233-cysteine 235 and cysteine 267-cysteine 270.

The protein belongs to the HSP33 family. Under oxidizing conditions two disulfide bonds are formed involving the reactive cysteines. Under reducing conditions zinc is bound to the reactive cysteines and the protein is inactive.

The protein localises to the cytoplasm. Functionally, redox regulated molecular chaperone. Protects both thermally unfolding and oxidatively damaged proteins from irreversible aggregation. Plays an important role in the bacterial defense system toward oxidative stress. The chain is 33 kDa chaperonin from Haemophilus ducreyi (strain 35000HP / ATCC 700724).